The following is a 279-amino-acid chain: Tryptophan synthase alpha chain (279 aa).

Active-site proton acceptor residues include glutamate 50 and aspartate 61.

This sequence belongs to the TrpA family. Tetramer of two alpha and two beta chains.

It catalyses the reaction (1S,2R)-1-C-(indol-3-yl)glycerol 3-phosphate + L-serine = D-glyceraldehyde 3-phosphate + L-tryptophan + H2O. Its pathway is amino-acid biosynthesis; L-tryptophan biosynthesis; L-tryptophan from chorismate: step 5/5. Functionally, the alpha subunit is responsible for the aldol cleavage of indoleglycerol phosphate to indole and glyceraldehyde 3-phosphate. This chain is Tryptophan synthase alpha chain, found in Rhizobium etli (strain ATCC 51251 / DSM 11541 / JCM 21823 / NBRC 15573 / CFN 42).